The primary structure comprises 115 residues: MRKMMPMNPKQLKKLMKQLDMRQLEGVKEVIIKMEDREIIIKEPIVTVIKAMGEKMYQIAGGSEEEKAIINISEEDIKLVMEQAGVDYETAKKALEETGGDLAEAILRLTDSGVE.

The region spanning 6–72 is the NAC-A/B domain; that stretch reads PMNPKQLKKL…SEEEKAIINI (67 aa).

This sequence belongs to the NAC-alpha family. Homodimer. Interacts with the ribosome. Binds ribosomal RNA.

Its function is as follows. Contacts the emerging nascent chain on the ribosome. The protein is Nascent polypeptide-associated complex protein of Pyrococcus horikoshii (strain ATCC 700860 / DSM 12428 / JCM 9974 / NBRC 100139 / OT-3).